The primary structure comprises 154 residues: MPKYYCDYCDTYLTHDSPSVRKTHCTGRKHKDNVKFYYQKWMEEQAQHLIDATTAAFKAGKIAQNPFSAGPPKPNVAIPPPSMGMPARPGMIPGMPAGAPPLLMGPGPMGMRPPMMMPMGMPPMGMGMRPPMMNGPPPQMNQKVYHNTDRRYHR.

Residues 4-36 form a Matrin-type zinc finger; sequence YYCDYCDTYLTHDSPSVRKTHCTGRKHKDNVKF.

Belongs to the U1 small nuclear ribonucleoprotein C family. In terms of assembly, U1 snRNP is composed of the 7 core Sm proteins B/B', D1, D2, D3, E, F and G that assemble in a heptameric protein ring on the Sm site of the small nuclear RNA to form the core snRNP, and at least 3 U1 snRNP-specific proteins U1-70K, U1-A and U1-C. U1-C interacts with U1 snRNA and the 5' splice-site region of the pre-mRNA.

It localises to the nucleus. Component of the spliceosomal U1 snRNP, which is essential for recognition of the pre-mRNA 5' splice-site and the subsequent assembly of the spliceosome. U1-C is directly involved in initial 5' splice-site recognition for both constitutive and regulated alternative splicing. The interaction with the 5' splice-site seems to precede base-pairing between the pre-mRNA and the U1 snRNA. Stimulates commitment or early (E) complex formation by stabilizing the base pairing of the 5' end of the U1 snRNA and the 5' splice-site region. The polypeptide is U1 small nuclear ribonucleoprotein C (Aedes aegypti (Yellowfever mosquito)).